We begin with the raw amino-acid sequence, 121 residues long: Large ribosomal subunit protein uL22 (121 aa).

The protein belongs to the universal ribosomal protein uL22 family. As to quaternary structure, part of the 50S ribosomal subunit.

This protein binds specifically to 23S rRNA; its binding is stimulated by other ribosomal proteins, e.g. L4, L17, and L20. It is important during the early stages of 50S assembly. It makes multiple contacts with different domains of the 23S rRNA in the assembled 50S subunit and ribosome. In terms of biological role, the globular domain of the protein is located near the polypeptide exit tunnel on the outside of the subunit, while an extended beta-hairpin is found that lines the wall of the exit tunnel in the center of the 70S ribosome. This Arthrobacter sp. (strain FB24) protein is Large ribosomal subunit protein uL22.